We begin with the raw amino-acid sequence, 269 residues long: Seven in absentia homolog 3 (269 aa).

The segment at 61-132 (GSFHPHHLSH…VVPHLRQIHR (72 aa)) adopts an SIAH-type; degenerate zinc-finger fold. Zn(2+) is bound by residues Cys107, Cys114, His126, and His131.

It belongs to the SINA (Seven in absentia) family.

It localises to the mitochondrion. Functionally, negative regulator of PRKN translocation to damaged mitochondria. Acts probably by destabilizing PINK1 protein, hence inhibiting PRKN targeting to dysfunctional depolarized mitochondria. This chain is Seven in absentia homolog 3 (SIAH3), found in Homo sapiens (Human).